The sequence spans 146 residues: MKLNELFAGLPKRRRPKVLGRGLGCGKGKTSGRGHKGQKARSGCAVNGFEGGQQPIFTRLPKRGFRSMSRARYEIVNIGALQRLISEKKIVDASNISKELMAELGMIPSPMSKVKILGKGALKAKVGISYDAVSKAAGKKVYLPKG.

A disordered region spans residues 18-45; it reads VLGRGLGCGKGKTSGRGHKGQKARSGCA. Over residues 30-39 the composition is skewed to basic residues; it reads TSGRGHKGQK.

The protein belongs to the universal ribosomal protein uL15 family. In terms of assembly, part of the 50S ribosomal subunit.

Binds to the 23S rRNA. This Anaplasma marginale (strain St. Maries) protein is Large ribosomal subunit protein uL15.